Here is a 245-residue protein sequence, read N- to C-terminus: Protein ARV 1 (245 aa).

Transmembrane regions (helical) follow at residues 70–90 (INPATVNIQHLLWKLVFAYLL), 117–137 (IKVLIGVLSANAAFIISFAIA), 163–183 (IFLLAMLVWEFPMSVIFFVDI), 200–220 (TMTRCIAVCLIAHLIRFLVGQ), and 224–244 (PTIFLIQIGSLLQYMSYFFRI).

The protein belongs to the ARV1 family. As to expression, restricted to tissues in which cells are actively dividing or expanding. Mostly expressed in roots and flowers, and, to a lower extent, in stems and leaves.

The protein localises to the endoplasmic reticulum membrane. Mediator of sterol homeostasis involved in sterol uptake, trafficking and distribution into membranes. Also regulates the sphingolipid metabolism. This Arabidopsis thaliana (Mouse-ear cress) protein is Protein ARV 1.